A 388-amino-acid chain; its full sequence is Processive diacylglycerol beta-glucosyltransferase (388 aa).

It belongs to the glycosyltransferase 28 family. UgtP subfamily.

Its subcellular location is the cell membrane. The enzyme catalyses a 1,2-diacyl-3-O-(beta-D-glucopyranosyl)-sn-glycerol + UDP-alpha-D-glucose = a 1,2-diacyl-3-O-(beta-D-Glc-(1-&gt;6)-beta-D-Glc)-sn-glycerol + UDP + H(+). It carries out the reaction a 1,2-diacyl-3-O-(beta-D-Glc-(1-&gt;6)-beta-D-Glc)-sn-glycerol + UDP-alpha-D-glucose = a 1,2-diacyl-3-O-(beta-D-Glc-(1-&gt;6)-beta-D-Glc-(1-&gt;6)-beta-D-Glc)-sn-glycerol + UDP + H(+). It catalyses the reaction a 1,2-diacyl-sn-glycerol + UDP-alpha-D-glucose = a 1,2-diacyl-3-O-(beta-D-glucopyranosyl)-sn-glycerol + UDP + H(+). Its pathway is glycolipid metabolism; diglucosyl-diacylglycerol biosynthesis. Functionally, processive glucosyltransferase involved in the biosynthesis of both the bilayer- and non-bilayer-forming membrane glucolipids. Is able to successively transfer up to three glucosyl residues to diacylglycerol (DAG), thereby catalyzing the formation of beta-monoglucosyl-DAG (3-O-(beta-D-glucopyranosyl)-1,2-diacyl-sn-glycerol), beta-diglucosyl-DAG (3-O-(beta-D-glucopyranosyl-beta-(1-&gt;6)-D-glucopyranosyl)-1,2-diacyl-sn-glycerol) and beta-triglucosyl-DAG (3-O-(beta-D-glucopyranosyl-beta-(1-&gt;6)-D-glucopyranosyl-beta-(1-&gt;6)-D-glucopyranosyl)-1,2-diacyl-sn-glycerol). Beta-diglucosyl-DAG is the predominant glycolipid found in Bacillales and is also used as a membrane anchor for lipoteichoic acid (LTA). The chain is Processive diacylglycerol beta-glucosyltransferase from Bacillus cereus (strain ATCC 14579 / DSM 31 / CCUG 7414 / JCM 2152 / NBRC 15305 / NCIMB 9373 / NCTC 2599 / NRRL B-3711).